Consider the following 96-residue polypeptide: MTPEVAINFRERAYSLLQADAEKIVKLIQVQMDHLTMPQCPLYEEVLDTQMFGLSREIDFAVRLGLVDEKDGKAILDRLERELSALHEACTKKKKK.

Belongs to the UPF0358 family.

This is UPF0358 protein Aflv_1873 from Anoxybacillus flavithermus (strain DSM 21510 / WK1).